Here is a 126-residue protein sequence, read N- to C-terminus: 13 kDa ribonucleoprotein-associated protein (126 aa).

It belongs to the eukaryotic ribosomal protein eL8 family. Component of the U3 snoRNP particle. Binds to the C'/D and B/C motifs in U3 snoRNA. Component of the 25S U4/U6.U5 tri-snRNP particle, a subcomplex of the spliceosome. Binds to the 5' stem-loop of U4 snRNA.

It is found in the nucleus. The protein resides in the nucleolus. Its function is as follows. Common component of the spliceosome and rRNA processing machinery. In association with the spliceosomal U4/U6.U5 tri-snRNP particle, required for splicing of pre-mRNA. In association with box C/D snoRNPs, required for processing of pre-ribosomal RNA (rRNA) and site-specific 2'-O-methylation of substrate RNAs. Essential for the accumulation and stability of U4 snRNA, U6 snRNA, and box C/D snoRNAs. The polypeptide is 13 kDa ribonucleoprotein-associated protein (SNU13) (Mycosarcoma maydis (Corn smut fungus)).